The chain runs to 245 residues: 5-oxoprolinase subunit A (245 aa).

This sequence belongs to the LamB/PxpA family. As to quaternary structure, forms a complex composed of PxpA, PxpB and PxpC.

It catalyses the reaction 5-oxo-L-proline + ATP + 2 H2O = L-glutamate + ADP + phosphate + H(+). Functionally, catalyzes the cleavage of 5-oxoproline to form L-glutamate coupled to the hydrolysis of ATP to ADP and inorganic phosphate. The polypeptide is 5-oxoprolinase subunit A (Neisseria meningitidis serogroup A / serotype 4A (strain DSM 15465 / Z2491)).